The following is a 768-amino-acid chain: Degenerin mec-4 (768 aa).

The Cytoplasmic segment spans residues 1-109 (MSWMQNLKNY…GEAPNVYYRA (109 aa)). The chain crosses the membrane as a helical span at residues 110-130 (VWVMLFLGCMIMLYLNAQSVL). Topologically, residues 131-718 (DKYNRNEKIV…VNLLADFGGQ (588 aa)) are extracellular. Disordered stretches follow at residues 187 to 221 (AGGNKEHDGEKEVITEAPTTPAPTTKPSRRRGKRD) and 237 to 260 (GSQGSSEQEDKDDEKEEEMHETTT). The segment covering 189–200 (GNKEHDGEKEVI) has biased composition (basic and acidic residues). Over residues 203–212 (APTTPAPTTK) the composition is skewed to low complexity. Residues 243–252 (EQEDKDDEKE) show a composition bias toward acidic residues. Residues Asn-336, Asn-357, Asn-480, Asn-484, Asn-503, and Asn-671 are each glycosylated (N-linked (GlcNAc...) asparagine). The helical transmembrane segment at 719–739 (LGLWCGISFLTCCEFVFLFLE) threads the bilayer. Residues 740 to 768 (TAYMSAEHNYSLYKKKKAEKAKKVASGSF) lie on the Cytoplasmic side of the membrane.

This sequence belongs to the amiloride-sensitive sodium channel (TC 1.A.6) family. The channel is probably composed of at least the mec-2, mec-4, mec-6 and mec-10 subunits.

Its subcellular location is the membrane. Probable sodium channel subunit. May be needed for mechanosensory transduction (touch sensitivity). Negatively regulates the turning step of male mating behavior. The polypeptide is Degenerin mec-4 (mec-4) (Caenorhabditis briggsae).